A 387-amino-acid chain; its full sequence is Intraflagellar transport protein 57 (387 aa).

This sequence belongs to the IFT57 family.

The protein resides in the cell projection. Its subcellular location is the cilium. The protein localises to the flagellum. It is found in the cytoplasm. It localises to the cytoskeleton. The protein resides in the flagellum axoneme. Its subcellular location is the flagellum basal body. In terms of biological role, component of the intraflagellar transport complex B (IFT-B) involved in flagellar assembly. The polypeptide is Intraflagellar transport protein 57 (Giardia intestinalis (strain ATCC 50803 / WB clone C6) (Giardia lamblia)).